The following is a 211-amino-acid chain: Beta-crystallin B3 (211 aa).

Methionine 1 carries the post-translational modification N-acetylmethionine. Alanine 2 carries the post-translational modification N-acetylalanine; in Beta-crystallin B3, N-terminally processed. Residues 2-23 (AEQHGAPEQAAASKSHGGLGGS) form an N-terminal arm region. Beta/gamma crystallin 'Greek key' domains follow at residues 24 to 63 (YKVT…QVES) and 64 to 108 (GPWL…RPLH). Positions 109–113 (IDGPD) are connecting peptide. Beta/gamma crystallin 'Greek key' domains lie at 114–155 (HKLH…RVIN) and 156–198 (GTWV…RRIR). Residues 200–211 (QKWHKRGCFLSS) form a C-terminal arm region.

Belongs to the beta/gamma-crystallin family. Homo/heterodimer, or complexes of higher-order. The structure of beta-crystallin oligomers seems to be stabilized through interactions between the N-terminal arms.

In terms of biological role, crystallins are the dominant structural components of the vertebrate eye lens. In Rattus norvegicus (Rat), this protein is Beta-crystallin B3 (Crybb3).